The primary structure comprises 47 residues: GVPCLCDSDGPSVRGNTLSGTLWLAGCPSGWHNCKAHGPTIGWCCKK.

Cystine bridges form between C4–C44, C6–C34, and C27–C45.

Belongs to the sea anemone sodium channel inhibitory toxin family. Type I subfamily.

The protein resides in the secreted. It localises to the nematocyst. Functionally, binds specifically to voltage-gated sodium channels (Nav) (site 3), thereby delaying their inactivation during signal transduction. Has a heart stimulation effect on isolated rat atria that is higher than that of Hk7a, Hk8a and Hk16a. The chain is Delta-actitoxin-Aspp1a from Anthopleura sp. (strain 'Zhanjiang') (Sea anemone).